Reading from the N-terminus, the 304-residue chain is Cytochrome c biogenesis protein CcsA (304 aa).

The next 8 helical transmembrane spans lie at serine 11–valine 31, alanine 37–leucine 57, glycine 63–leucine 83, isoleucine 96–leucine 116, valine 141–valine 161, threonine 212–asparagine 232, threonine 246–leucine 263, and valine 275–isoleucine 295.

This sequence belongs to the CcmF/CycK/Ccl1/NrfE/CcsA family. In terms of assembly, may interact with ccs1.

The protein localises to the cellular thylakoid membrane. Functionally, required during biogenesis of c-type cytochromes (cytochrome c6 and cytochrome f) at the step of heme attachment. The sequence is that of Cytochrome c biogenesis protein CcsA from Synechococcus sp. (strain CC9605).